We begin with the raw amino-acid sequence, 371 residues long: Queuine tRNA-ribosyltransferase (371 aa).

D90 serves as the catalytic Proton acceptor. Substrate-binding positions include 90-94 (DSGGF), D144, Q188, and G215. Residues 246–252 (GVGTPED) are RNA binding. D265 functions as the Nucleophile in the catalytic mechanism. The RNA binding; important for wobble base 34 recognition stretch occupies residues 270–274 (TRNAR). Residues C303, C305, C308, and H334 each contribute to the Zn(2+) site.

This sequence belongs to the queuine tRNA-ribosyltransferase family. As to quaternary structure, homodimer. Within each dimer, one monomer is responsible for RNA recognition and catalysis, while the other monomer binds to the replacement base PreQ1. Zn(2+) serves as cofactor.

It catalyses the reaction 7-aminomethyl-7-carbaguanine + guanosine(34) in tRNA = 7-aminomethyl-7-carbaguanosine(34) in tRNA + guanine. The protein operates within tRNA modification; tRNA-queuosine biosynthesis. Functionally, catalyzes the base-exchange of a guanine (G) residue with the queuine precursor 7-aminomethyl-7-deazaguanine (PreQ1) at position 34 (anticodon wobble position) in tRNAs with GU(N) anticodons (tRNA-Asp, -Asn, -His and -Tyr). Catalysis occurs through a double-displacement mechanism. The nucleophile active site attacks the C1' of nucleotide 34 to detach the guanine base from the RNA, forming a covalent enzyme-RNA intermediate. The proton acceptor active site deprotonates the incoming PreQ1, allowing a nucleophilic attack on the C1' of the ribose to form the product. After dissociation, two additional enzymatic reactions on the tRNA convert PreQ1 to queuine (Q), resulting in the hypermodified nucleoside queuosine (7-(((4,5-cis-dihydroxy-2-cyclopenten-1-yl)amino)methyl)-7-deazaguanosine). This is Queuine tRNA-ribosyltransferase from Neisseria meningitidis serogroup C / serotype 2a (strain ATCC 700532 / DSM 15464 / FAM18).